The sequence spans 397 residues: Lysophospholipid transporter LplT (397 aa).

Residues 1–17 (MSESVHTNTSLWSKGMK) are Periplasmic-facing. Residues 18 to 38 (AVIVAQFLSAFGDNALLFATL) form a helical membrane-spanning segment. The Cytoplasmic portion of the chain corresponds to 39-52 (ALLKAQFYPEWSQP). Residues 53–73 (ILQMVFVGAYILFAPFVGQVA) form a helical membrane-spanning segment. The Periplasmic portion of the chain corresponds to 74–90 (DSFAKGRVMMFANGLKL). A helical membrane pass occupies residues 91 to 111 (LGAASICFGINPFLGYTLVGV). Over 112–144 (GAAAYSPAKYGILGELTTGSKLVKANGLMEAST) the chain is Cytoplasmic. A helical transmembrane segment spans residues 145–165 (IAAILLGSVAGGVLADWHVLV). A topological domain (periplasmic) is located at residue alanine 166. A helical transmembrane segment spans residues 167 to 187 (LAACALAYGGAVVANIYIPKL). The Cytoplasmic segment spans residues 188 to 226 (AAARPGQSWNLINMTRSFLNACTSLWRNGETRFSLVGTS). Residues 227–247 (LFWGAGVTLRFLLVLWVPVAL) form a helical membrane-spanning segment. Over 248–256 (GITDNATPT) the chain is Periplasmic. The helical transmembrane segment at 257–277 (YLNAMVAIGIVVGAGAAAKLV) threads the bilayer. Topologically, residues 278-280 (TLE) are cytoplasmic. Residues 281–301 (TVSRCMPAGILIGVVVLIFSL) form a helical membrane-spanning segment. Topologically, residues 302–304 (QHE) are periplasmic. A helical transmembrane segment spans residues 305–325 (LLPAYALLMLIGVLGGFFVVP). Residues 326-343 (LNALLQERGKKSVGAGNA) are Cytoplasmic-facing. A helical transmembrane segment spans residues 344–364 (IAVQNLGENSAMLLMLGIYSL). Over 365–366 (AV) the chain is Periplasmic. Residues 367-387 (MVGIPVVPIGIGFGALFALAI) form a helical membrane-spanning segment. Over 388–397 (TALWIWQRRY) the chain is Cytoplasmic.

This sequence belongs to the major facilitator superfamily. LplT (TC 2.A.1.42) family.

It is found in the cell inner membrane. In terms of biological role, catalyzes the facilitated diffusion of 2-acyl-glycero-3-phosphoethanolamine (2-acyl-GPE) into the cell. This Escherichia coli O127:H6 (strain E2348/69 / EPEC) protein is Lysophospholipid transporter LplT.